The primary structure comprises 2431 residues: Reducing polyketide synthase rads1 (2431 aa).

Residues 10 to 440 (RAPIAIIGLA…GTNAHIVLER (431 aa)) enclose the Ketosynthase family 3 (KS3) domain. Catalysis depends on for beta-ketoacyl synthase activity residues Cys184, His319, and His363. The tract at residues 558 to 895 (FVFTGQGAQW…NLAAELFRRG (338 aa)) is malonyl-CoA:ACP transacylase (MAT) domain. An N-terminal hotdog fold region spans residues 944-1080 (KSILGAELPS…GLISIAYEDT (137 aa)). The 324-residue stretch at 944 to 1267 (KSILGAELPS…LAELEVDDAA (324 aa)) folds into the PKS/mFAS DH domain. The dehydratase (DH) domain stretch occupies residues 946–1264 (ILGAELPSMD…DFRLAELEVD (319 aa)). His976 acts as the Proton acceptor; for dehydratase activity in catalysis. The C-terminal hotdog fold stretch occupies residues 1108–1267 (PETCSKERFY…LAELEVDDAA (160 aa)). Asp1174 functions as the Proton donor; for dehydratase activity in the catalytic mechanism. Residues 1705-2023 (GLLNTLHFVP…QGKHLGKMIL (319 aa)) form an enoyl reductase (ER) domain region. Cys1822 (phosphocysteine intermediate) is an active-site residue. The ketoreductase (KR) domain stretch occupies residues 2048 to 2228 (ATYLIVGGLG…VSVNLGIMRD (181 aa)). Positions 2346-2423 (VAAAIITEAL…TFAVQIAKKS (78 aa)) constitute a Carrier domain. At Ser2383 the chain carries O-(pantetheine 4'-phosphoryl)serine.

The protein operates within secondary metabolite biosynthesis. Reducing polyketide synthase; part of the gene cluster that mediates the biosynthesis of radicicol, a resorcylic acid lactone (RAL) that irreversibly inhibits the HSP90 molecular chaperone, an important target for cancer chemotherapy. The cluster encodes only two apparent post-PKS enzymes, a cytochrome P450 monooxygenase (radP) and a non-heme halogenase (radH) that introduce the epoxide and the chlorine, respectively. If this cluster includes all the genes required for radicicol biosynthesis, the remaining structural features of radicicol are presumably generated by the PKSs rads1 and rads2. The C-2' ketone could arise if the R-PKS rads1 and NR-PKS rads2 each carry out four iterations, in contrast to the five iteration-three iteration split for the hypothemycin PKSs. The origin of the cis 5',6' double bond is not known. The radicicol R-PKS radS1 ER domain may catalyze either double bond isomerization or reduction in the third iteration. In Floropilus chiversii (Chaetomium chiversii), this protein is Reducing polyketide synthase rads1.